Reading from the N-terminus, the 469-residue chain is Ribosomal protein uS12 methylthiotransferase RimO (469 aa).

Residues 34–144 (NKIGFVSLGC…VLEHVHQFAP (111 aa)) enclose the MTTase N-terminal domain. Residues Cys-43, Cys-79, Cys-108, Cys-176, Cys-180, and Cys-183 each coordinate [4Fe-4S] cluster. The Radical SAM core domain maps to 162 to 399 (LTPKHYAYLK…MLVQQEISAA (238 aa)). Residues 402-468 (QKRIGSTMKV…EYDLWGSLVR (67 aa)) form the TRAM domain.

This sequence belongs to the methylthiotransferase family. RimO subfamily. [4Fe-4S] cluster serves as cofactor.

Its subcellular location is the cytoplasm. The catalysed reaction is L-aspartate(89)-[ribosomal protein uS12]-hydrogen + (sulfur carrier)-SH + AH2 + 2 S-adenosyl-L-methionine = 3-methylsulfanyl-L-aspartate(89)-[ribosomal protein uS12]-hydrogen + (sulfur carrier)-H + 5'-deoxyadenosine + L-methionine + A + S-adenosyl-L-homocysteine + 2 H(+). Functionally, catalyzes the methylthiolation of an aspartic acid residue of ribosomal protein uS12. The chain is Ribosomal protein uS12 methylthiotransferase RimO from Vibrio vulnificus (strain YJ016).